A 694-amino-acid chain; its full sequence is Threonine--tRNA ligase (694 aa).

Positions 8–74 (NFVNTSVTTH…EETATFTAVP (67 aa)) constitute a TGS domain. Residues 273 to 579 (DHRRLGTELD…LLEHYAGAFP (307 aa)) form a catalytic region. Residues C378, H429, and H556 each coordinate Zn(2+).

This sequence belongs to the class-II aminoacyl-tRNA synthetase family. In terms of assembly, homodimer. Zn(2+) is required as a cofactor.

It is found in the cytoplasm. It catalyses the reaction tRNA(Thr) + L-threonine + ATP = L-threonyl-tRNA(Thr) + AMP + diphosphate + H(+). Functionally, catalyzes the attachment of threonine to tRNA(Thr) in a two-step reaction: L-threonine is first activated by ATP to form Thr-AMP and then transferred to the acceptor end of tRNA(Thr). Also edits incorrectly charged L-seryl-tRNA(Thr). In Corynebacterium efficiens (strain DSM 44549 / YS-314 / AJ 12310 / JCM 11189 / NBRC 100395), this protein is Threonine--tRNA ligase.